A 146-amino-acid chain; its full sequence is 3-hydroxyacyl-[acyl-carrier-protein] dehydratase FabZ (146 aa).

The active site involves His47.

This sequence belongs to the thioester dehydratase family. FabZ subfamily.

The protein localises to the cytoplasm. It catalyses the reaction a (3R)-hydroxyacyl-[ACP] = a (2E)-enoyl-[ACP] + H2O. Functionally, involved in unsaturated fatty acids biosynthesis. Catalyzes the dehydration of short chain beta-hydroxyacyl-ACPs and long chain saturated and unsaturated beta-hydroxyacyl-ACPs. This Methylococcus capsulatus (strain ATCC 33009 / NCIMB 11132 / Bath) protein is 3-hydroxyacyl-[acyl-carrier-protein] dehydratase FabZ.